A 562-amino-acid polypeptide reads, in one-letter code: Oxygen-dependent choline dehydrogenase (562 aa).

4-33 lines the FAD pocket; that stretch reads DYIIIGAGSAGNVLATRLTEDPNTSVLLLE. The Proton acceptor role is filled by His-473.

Belongs to the GMC oxidoreductase family. It depends on FAD as a cofactor.

The protein resides in the cell membrane. The enzyme catalyses choline + A = betaine aldehyde + AH2. The catalysed reaction is betaine aldehyde + NAD(+) + H2O = glycine betaine + NADH + 2 H(+). The protein operates within amine and polyamine biosynthesis; betaine biosynthesis via choline pathway; betaine aldehyde from choline (cytochrome c reductase route): step 1/1. Involved in the biosynthesis of the osmoprotectant glycine betaine. Catalyzes the oxidation of choline to betaine aldehyde and betaine aldehyde to glycine betaine at the same rate. This Escherichia coli O157:H7 protein is Oxygen-dependent choline dehydrogenase.